We begin with the raw amino-acid sequence, 240 residues long: Tubulin alpha chain (240 aa).

A GTP-binding site is contributed by Asn-17. The active site involves Glu-43.

It belongs to the tubulin family. Dimer of alpha and beta chains. A typical microtubule is a hollow water-filled tube with an outer diameter of 25 nm and an inner diameter of 15 nM. Alpha-beta heterodimers associate head-to-tail to form protofilaments running lengthwise along the microtubule wall with the beta-tubulin subunit facing the microtubule plus end conferring a structural polarity. Microtubules usually have 13 protofilaments but different protofilament numbers can be found in some organisms and specialized cells. The cofactor is Mg(2+). Undergoes a tyrosination/detyrosination cycle, the cyclic removal and re-addition of a C-terminal tyrosine residue by the enzymes tubulin tyrosine carboxypeptidase (TTCP) and tubulin tyrosine ligase (TTL), respectively.

It localises to the cytoplasm. It is found in the cytoskeleton. It carries out the reaction GTP + H2O = GDP + phosphate + H(+). Its function is as follows. Tubulin is the major constituent of microtubules, a cylinder consisting of laterally associated linear protofilaments composed of alpha- and beta-tubulin heterodimers. Microtubules grow by the addition of GTP-tubulin dimers to the microtubule end, where a stabilizing cap forms. Below the cap, tubulin dimers are in GDP-bound state, owing to GTPase activity of alpha-tubulin. The chain is Tubulin alpha chain from Octopus vulgaris (Common octopus).